The primary structure comprises 161 residues: Small ribosomal subunit protein uS9 (161 aa).

The protein belongs to the universal ribosomal protein uS9 family.

This Rickettsia prowazekii (strain Madrid E) protein is Small ribosomal subunit protein uS9 (rpsI).